The sequence spans 599 residues: Sulfite reductase [NADPH] flavoprotein alpha-component (599 aa).

The Flavodoxin-like domain maps to 64–202 (ITIISASQTG…AASEWRARVV (139 aa)). FMN contacts are provided by residues 70-75 (SQTGNA), 117-120 (STQG), and 153-162 (LGDSSYEFFC). The FAD-binding FR-type domain occupies 234-448 (DAPLAASLSV…IEHNDNFRLP (215 aa)). FAD-binding positions include T322, A356, 386–389 (RLYS), 404–406 (TVG), Y410, and 419–422 (GGAS). Residues 519-520 (SR), 525-529 (KIYVQ), and D561 contribute to the NADP(+) site. FAD is bound at residue Y599.

Belongs to the NADPH-dependent sulphite reductase flavoprotein subunit CysJ family. The protein in the N-terminal section; belongs to the flavodoxin family. This sequence in the C-terminal section; belongs to the flavoprotein pyridine nucleotide cytochrome reductase family. In terms of assembly, alpha(8)-beta(8). The alpha component is a flavoprotein, the beta component is a hemoprotein. FAD serves as cofactor. Requires FMN as cofactor.

The catalysed reaction is hydrogen sulfide + 3 NADP(+) + 3 H2O = sulfite + 3 NADPH + 4 H(+). The protein operates within sulfur metabolism; hydrogen sulfide biosynthesis; hydrogen sulfide from sulfite (NADPH route): step 1/1. Component of the sulfite reductase complex that catalyzes the 6-electron reduction of sulfite to sulfide. This is one of several activities required for the biosynthesis of L-cysteine from sulfate. The flavoprotein component catalyzes the electron flow from NADPH -&gt; FAD -&gt; FMN to the hemoprotein component. The polypeptide is Sulfite reductase [NADPH] flavoprotein alpha-component (Escherichia coli O6:H1 (strain CFT073 / ATCC 700928 / UPEC)).